Here is a 287-residue protein sequence, read N- to C-terminus: Prohibitin-1 (287 aa).

Residues 102–116 (VLQLPAIYQNLGLDY) form an interaction with ATG8 region. Positions 109–112 (YQNL) match the AIM motif. A coiled-coil region spans residues 180–224 (EFTKAVEQKQIAQQDAERAKFLVEKAEQERQASVIRAEGEAESAE). The disordered stretch occupies residues 264-287 (SQHSGGGNSESSGSPNSLLLNIGR). Low complexity predominate over residues 272–287 (SESSGSPNSLLLNIGR).

The protein belongs to the prohibitin family. In terms of assembly, the mitochondrial prohibitin complex consists of two subunits (PHB1 and PHB2). The subunits assemble into a membrane-associated ring-shaped supercomplex of approximately 1 mDa. The mitochondrial prohibitin complex interacts with the m-AAA protease, a heterohexamer composed of YTA12/RCA1 and YTA10/AFG3. The mitochondrial prohibitin complex interacts with ATG8 and the interaction may support mitophagosome assembly. Post-translationally, the N-terminus is blocked.

The protein localises to the mitochondrion inner membrane. Its function is as follows. Prohibitin probably acts as a holdase/unfoldase for the stabilization of newly synthesized mitochondrial proteins. Involved in mitophagy; may act as an adapter for ATG8 that supports mitophagosome assembly. Negatively regulates the proteolytic processing of ATG32 via the i-AAA protease. Acts as a negative regulator of the m-AAA protease. This is Prohibitin-1 (PHB1) from Saccharomyces cerevisiae (strain ATCC 204508 / S288c) (Baker's yeast).